The chain runs to 87 residues: Lipid-anchored plasma membrane protein uvi15 (87 aa).

Residues 1–64 are disordered; the sequence is MSAQQFYGDK…MYVQQPQASD (64 aa). Residues 18 to 41 are compositionally biased toward low complexity; sequence QQAYGGPNYYPPQQNYPQQGYAPP.

This sequence belongs to the CYSTM1 family. Post-translationally, palmitoylated.

The protein resides in the cell membrane. It is found in the cell tip. In terms of biological role, required for the maintenance of viability of cells in stationary phase and in starvation conditions. In Schizosaccharomyces pombe (strain 972 / ATCC 24843) (Fission yeast), this protein is Lipid-anchored plasma membrane protein uvi15 (uvi15).